We begin with the raw amino-acid sequence, 417 residues long: Serpin A9 (417 aa).

A signal peptide spans 1–23 (MASYLYGVLFAVGLCAPIYCVSP). Residues Asn-101 and Asn-390 are each glycosylated (N-linked (GlcNAc...) asparagine).

This sequence belongs to the serpin family. In terms of tissue distribution, highly expressed in normal germinal center (GC) B-cells and GC B-cell-derived malignancies.

Its subcellular location is the secreted. It is found in the cytoplasm. The protein localises to the membrane. Its function is as follows. Protease inhibitor that inhibits trypsin and trypsin-like serine proteases (in vitro). Inhibits plasmin and thrombin with lower efficiency (in vitro). The sequence is that of Serpin A9 (SERPINA9) from Homo sapiens (Human).